The chain runs to 390 residues: Acid protease (390 aa).

Positions 1–18 are cleaved as a signal peptide; it reads MLFSKSLLLSVLASLSFA. In terms of domain architecture, Peptidase A1 spans 75–386; that stretch reads YLTTIEIGTP…DIDNSQVGIA (312 aa). Active-site residues include Asp93 and Asp282.

Belongs to the peptidase A1 family.

The chain is Acid protease (PEP1) from Saccharomycopsis fibuligera (Yeast).